A 307-amino-acid polypeptide reads, in one-letter code: Ribonuclease Z (307 aa).

Zn(2+) is bound by residues His-61, His-63, Asp-65, His-66, His-138, Asp-207, and His-265. Asp-65 serves as the catalytic Proton acceptor.

This sequence belongs to the RNase Z family. In terms of assembly, homodimer. Requires Zn(2+) as cofactor.

The catalysed reaction is Endonucleolytic cleavage of RNA, removing extra 3' nucleotides from tRNA precursor, generating 3' termini of tRNAs. A 3'-hydroxy group is left at the tRNA terminus and a 5'-phosphoryl group is left at the trailer molecule.. In terms of biological role, zinc phosphodiesterase, which displays some tRNA 3'-processing endonuclease activity. Probably involved in tRNA maturation, by removing a 3'-trailer from precursor tRNA. The chain is Ribonuclease Z from Methanothermobacter thermautotrophicus (strain ATCC 29096 / DSM 1053 / JCM 10044 / NBRC 100330 / Delta H) (Methanobacterium thermoautotrophicum).